Here is an 874-residue protein sequence, read N- to C-terminus: Bifunctional uridylyltransferase/uridylyl-removing enzyme (874 aa).

A uridylyltransferase region spans residues 1–332; that stretch reads MTLQSPLTFR…NGGASEDAEI (332 aa). Positions 333–692 are uridylyl-removing; that stretch reads IDEDFQRRGA…ISKKATRGGT (360 aa). Residues 451–573 enclose the HD domain; the sequence is VDEHSIRLLK…VRDEEYLEYL (123 aa). ACT domains follow at residues 693 to 777 and 800 to 874; these read EVFV…RTPN and LMEF…SVSA.

It belongs to the GlnD family. It depends on Mg(2+) as a cofactor.

It catalyses the reaction [protein-PII]-L-tyrosine + UTP = [protein-PII]-uridylyl-L-tyrosine + diphosphate. The catalysed reaction is [protein-PII]-uridylyl-L-tyrosine + H2O = [protein-PII]-L-tyrosine + UMP + H(+). With respect to regulation, uridylyltransferase (UTase) activity is inhibited by glutamine, while glutamine activates uridylyl-removing (UR) activity. In terms of biological role, modifies, by uridylylation and deuridylylation, the PII regulatory proteins (GlnB and homologs), in response to the nitrogen status of the cell that GlnD senses through the glutamine level. Under low glutamine levels, catalyzes the conversion of the PII proteins and UTP to PII-UMP and PPi, while under higher glutamine levels, GlnD hydrolyzes PII-UMP to PII and UMP (deuridylylation). Thus, controls uridylylation state and activity of the PII proteins, and plays an important role in the regulation of nitrogen assimilation and metabolism. In Vibrio campbellii (strain ATCC BAA-1116), this protein is Bifunctional uridylyltransferase/uridylyl-removing enzyme.